Consider the following 523-residue polypeptide: MAAVGRVGSFGSSPPGLASTYASGPLANELASGSGGPAAGDDEDGQNLWSCILSEVSTRSRSKLPTGKNVLLLGEDGAGKTSLIRRIQGIEEYKKGRGLEYLYLNVHDEDRDDQTRCNVWILDGDLYHKGLLKFSLDALSLRDTLVMLVVDMSKPWTALDSLQKWASVVREHVDKLKIPPEEMKEMEQKLIRDFQEYVEPGEDFPASPQRRTTGAQEDRGDSVVLPLGADTLTHNLGLPVLVVCTKCDAISVLEKEHDYRDEHFDFIQSHIRKFCLQYGAALIYTSVKENKNIDLVYKYIVQKLYGFPYKIPAVVVEKDAVFIPAGWDNDKKIGILHENFQTLKVEDNFEDIITKPPVRKFVHEKEIMAEDDQVFLMKLQSLLAKQPPTAAGRPVDASPRVPGGSPRTPNRSVSSNVASVSPIPAGSKKIDPNMKAGATSEGVLANFFNSLLSKKTGSPGGPGVGGSPGGGAAGASPSLPPSAKKSGQKPVLSDVHAELDRITRKPASVSPTTPTSPTEGEAS.

Residues 1–25 (MAAVGRVGSFGSSPPGLASTYASGP) are disordered. 74 to 81 (GEDGAGKT) contributes to the ATP binding site. 3 disordered regions span residues 200 to 219 (PGEDFPASPQRRTTGAQEDR), 387 to 434 (PPTA…DPNM), and 457 to 523 (GSPG…GEAS). Ser207 carries the phosphoserine modification. Residue Thr213 is modified to Phosphothreonine. Ser398 and Ser405 each carry phosphoserine. Thr408 is modified (phosphothreonine). A phosphoserine mark is found at Ser412, Ser419, Ser421, and Ser427. Residues 412–421 (SVSSNVASVS) are compositionally biased toward low complexity. The segment covering 458 to 473 (SPGGPGVGGSPGGGAA) has biased composition (gly residues). Positions 474 to 485 (GASPSLPPSAKK) are enriched in low complexity. Phosphoserine occurs at positions 486 and 510. A compositionally biased stretch (low complexity) spans 506-523 (PASVSPTTPTSPTEGEAS). 3 positions are modified to phosphothreonine: Thr512, Thr513, and Thr515. Ser516 is modified (phosphoserine).

It belongs to the dynein light intermediate chain family. In terms of assembly, homodimer. The cytoplasmic dynein 1 complex consists of two catalytic heavy chains (HCs) and a number of non-catalytic subunits presented by intermediate chains (ICs), light intermediate chains (LICs) and light chains (LCs); the composition seems to vary in respect to the IC, LIC and LC composition. The heavy chain homodimer serves as a scaffold for the probable homodimeric assembly of the respective non-catalytic subunits. The ICs and LICs bind directly to the HC dimer and the LCs assemble on the IC dimer. Self-associates. Interacts with DYNC1H1; DYNC1LI1 and DYNC1LI2 bind mutually exclusive to DYNC1H1. Interacts with PCNT. Forms a complex with RAB11FIP3 and RAB11A1; the interaction between DYNC1LI1 and RAB11FIP3 is direct and induces DYNC1LI1 localization onto endosomal membrane; the complex regulates endocytic trafficking. Interacts with RUFY3. Phosphorylated during mitosis but not in interphase.

The protein localises to the cytoplasm. It is found in the chromosome. It localises to the centromere. Its subcellular location is the kinetochore. The protein resides in the cytoskeleton. The protein localises to the spindle pole. It is found in the recycling endosome membrane. In terms of biological role, acts as one of several non-catalytic accessory components of the cytoplasmic dynein 1 complex that are thought to be involved in linking dynein to cargos and to adapter proteins that regulate dynein function. Cytoplasmic dynein 1 acts as a motor for the intracellular retrograde motility of vesicles and organelles along microtubules. May play a role in binding dynein to membranous organelles or chromosomes. Probably involved in the microtubule-dependent transport of pericentrin. Is required for progress through the spindle assembly checkpoint. The phosphorylated form appears to be involved in the selective removal of MAD1L1 and MAD1L2 but not BUB1B from kinetochores. Forms a functional Rab11/RAB11FIP3/dynein complex onto endosomal membrane that regulates the movement of peripheral sorting endosomes (SE) along microtubule tracks toward the microtubule organizing center/centrosome, generating the endosomal recycling compartment (ERC). In Mus musculus (Mouse), this protein is Cytoplasmic dynein 1 light intermediate chain 1 (Dync1li1).